Consider the following 207-residue polypeptide: Superoxide dismutase [Mn] (207 aa).

The Mn(2+) site is built by histidine 30, histidine 78, aspartate 166, and histidine 170.

It belongs to the iron/manganese superoxide dismutase family. Homodimer. Requires Mn(2+) as cofactor.

It catalyses the reaction 2 superoxide + 2 H(+) = H2O2 + O2. Destroys superoxide anion radicals which are normally produced within the cells and which are toxic to biological systems. The sequence is that of Superoxide dismutase [Mn] (sodA) from Chlamydia pneumoniae (Chlamydophila pneumoniae).